The sequence spans 445 residues: MAALEERGLSQDQTEKLLQFQDLTGIESIDQCRQTLQQHNWNIETAVQDRLNEQEGVPRVFNTTPNRPLQVNTADHRVYSYVVSRPQPRGLLGWGYYLIMLPFRITYYTVLDIFRFALRFIRPDPRSRVTDPVGDVVSFIHLFEEKYGSTHPVFYQGTYSQALNDAKQELRFLLVYLHGEDHQDSDDFCRNTLCTSEVTHFINSRMLFWACSSNKPEGFRVSQALHESTYPFLAMIMLKDRRMTVVGRLEGLIQPQDLINQLTFIIEANQTYLVSERLEREERNQTQVLRQQQDEAYLVSLRADQEKERKKKEKQDQKRREEEEAQRKQMLEERKKRNLEEEKERKSECLPAEPVPDHPDNVKIIFKMPNGTRVERRFLFTQSLSVIHDFLFSLKETPEKFQIVTSFPRQVLPCLPSEEIPVPPTLQEAGLSQSQLLFVQDLTDD.

The 37-residue stretch at 12–48 folds into the UBA domain; it reads DQTEKLLQFQDLTGIESIDQCRQTLQQHNWNIETAVQ. Positions 275–353 form a coiled coil; that stretch reads SERLEREERN…ERKSECLPAE (79 aa). The tract at residues 302–355 is disordered; it reads RADQEKERKKKEKQDQKRREEEEAQRKQMLEERKKRNLEEEKERKSECLPAEPV. Residues 303–348 show a composition bias toward basic and acidic residues; the sequence is ADQEKERKKKEKQDQKRREEEEAQRKQMLEERKKRNLEEEKERKSE. A UBX domain is found at 357–439; the sequence is DHPDNVKIIF…GLSQSQLLFV (83 aa).

It localises to the cytoplasm. It is found in the lipid droplet. The protein localises to the endoplasmic reticulum. Functionally, plays an important role in endoplasmic reticulum-associated degradation (ERAD) that mediates ubiquitin-dependent degradation of misfolded endoplasmic reticulum proteins. Involved in inhibition of lipid droplet degradation. Involved in stress granule disassembly. This chain is FAS-associated factor 2-B (faf2-b), found in Xenopus laevis (African clawed frog).